Here is a 645-residue protein sequence, read N- to C-terminus: Envelope glycoprotein (645 aa).

The first 33 residues, 1–33, serve as a signal peptide directing secretion; that stretch reads MESPAFSKPLKDKINPWGPLIIMGILVRAGASV. The segment at 32 to 237 is receptor-binding domain (RBD); sequence SVQRDSPHQV…QVLNVGPRVP (206 aa). At 34 to 585 the chain is on the extracellular side; it reads QRDSPHQVFN…FNRSPWFTTL (552 aa). Residues Asn-43 and Asn-58 are each glycosylated (N-linked (GlcNAc...) asparagine; by host). Disulfide bonds link Cys-113/Cys-130 and Cys-122/Cys-135. Positions 260–285 are disordered; the sequence is RTPRPPPSGAASMVPGAPPPSQQPGT. An N-linked (GlcNAc...) asparagine; by host glycan is attached at Asn-301. 6 cysteine pairs are disulfide-bonded: Cys-311/Cys-314, Cys-311/Cys-538, Cys-341/Cys-395, Cys-360/Cys-372, Cys-402/Cys-415, and Cys-530/Cys-537. Positions 311–314 match the CXXC motif; it reads CWLC. 2 N-linked (GlcNAc...) asparagine; by host glycosylation sites follow: Asn-333 and Asn-340. 2 N-linked (GlcNAc...) asparagine; by host glycosylation sites follow: Asn-373 and Asn-409. Positions 447 to 467 are fusion peptide; it reads VSLTLALLLGGLTMGGIAAGV. The stretch at 490 to 510 forms a coiled coil; sequence DLGALEKSVSALEKSLTSLSE. The interval 513 to 529 is immunosuppression; that stretch reads LQNRRGLDLLFLKEGGL. The CX6CC signature appears at 530–538; sequence CAALKEECC. Residues 586-606 form a helical membrane-spanning segment; it reads ISTIMGPLIVLLLILLFGPCI. Cys-605 carries the S-palmitoyl cysteine; by host lipid modification. The Cytoplasmic portion of the chain corresponds to 607–640; it reads LNRLVQFVKDRISVVQALVLTQQYHQLKSIDPEE. Residues 630 to 633 carry the YXXL motif; contains endocytosis signal motif; the sequence is YHQL.

In terms of assembly, the mature envelope protein (Env) consists of a trimer of SU-TM heterodimers attached by a labile interchain disulfide bond. The activated Env consists of SU monomers and TM trimers. In terms of processing, specific enzymatic cleavages in vivo yield mature proteins. Envelope glycoproteins are synthesized as an inactive precursor that is N-glycosylated and processed likely by host cell furin or by a furin-like protease in the Golgi to yield the mature SU and TM proteins. The cleavage site between SU and TM requires the minimal sequence [KR]-X-[KR]-R. The R-peptide is released from the C-terminus of the cytoplasmic tail of the TM protein upon particle formation as a result of proteolytic cleavage by the viral protease. Cleavage of this peptide is required for TM to become fusogenic. Post-translationally, the CXXC motif is highly conserved across a broad range of retroviral envelope proteins. It is thought to participate in the formation of a labile disulfide bond possibly with the CX6CC motif present in the transmembrane protein. Isomerization of the intersubunit disulfide bond to an SU intrachain disulfide bond is thought to occur upon receptor recognition in order to allow membrane fusion. The transmembrane protein is palmitoylated. In terms of processing, the R-peptide is palmitoylated.

The protein resides in the virion membrane. Its subcellular location is the host cell membrane. Functionally, the surface protein (SU) attaches the virus to the host cell by binding to its receptor. This interaction activates a thiol in a CXXC motif of the C-terminal domain, where the other Cys residue participates in the formation of the intersubunit disulfide. The activated thiol will attack the disulfide and cause its isomerization into a disulfide isomer within the motif. This leads to SU displacement and TM refolding, and is thought to activate its fusogenic potential by unmasking its fusion peptide. Fusion occurs at the host cell plasma membrane. The transmembrane protein (TM) acts as a class I viral fusion protein. Under the current model, the protein has at least 3 conformational states: pre-fusion native state, pre-hairpin intermediate state, and post-fusion hairpin state. During viral and target cell membrane fusion, the coiled coil regions (heptad repeats) assume a trimer-of-hairpins structure, positioning the fusion peptide in close proximity to the C-terminal region of the ectodomain. The formation of this structure appears to drive apposition and subsequent fusion of viral and target cell membranes. Membranes fusion leads to delivery of the nucleocapsid into the cytoplasm. The polypeptide is Envelope glycoprotein (env) (Homo sapiens (Human)).